A 394-amino-acid polypeptide reads, in one-letter code: MAKAKFERTKPHVNIGTIGHVDHGKTSLTAAITIILAKTGGAKATAYDQIDAAPEEKERGITISTAHVEYETNNRHYAHVDCPGHADYVKNMITGAAQMDGAILVVSAADGPMPQTREHILLAKQVGVPAMVVFLNKVDMVDDPDLLELVEMEVRELLSKYGFPGNEIPIIKGSALQALEGKPEGEKAINELMNAVDSYIPQPIRATDKPFLMPIEDVFSISGRGTVVTGRVESGIIKVGEEIEIVGLKNTQKTTCTGVEMFRKLLDEGQSGDNVGILLRGTKREEVERGQVLAKPGSIKPHDKFEAEVYVLSKEEGGRHTPFTNDYRPQFYFRTTDVTGTIKLPFDKQMVMPGDNATFSVELIKPIAMQEGLKFSIREGGRTVGAGVVTRINN.

The tr-type G domain maps to 10–204 (KPHVNIGTIG…AVDSYIPQPI (195 aa)). The interval 19-26 (GHVDHGKT) is G1. 19-26 (GHVDHGKT) lines the GTP pocket. A Mg(2+)-binding site is contributed by Thr26. The segment at 60-64 (GITIS) is G2. Residues 81-84 (DCPG) are G3. GTP contacts are provided by residues 81 to 85 (DCPGH) and 136 to 139 (NKVD). The segment at 136–139 (NKVD) is G4. A G5 region spans residues 174–176 (SAL).

It belongs to the TRAFAC class translation factor GTPase superfamily. Classic translation factor GTPase family. EF-Tu/EF-1A subfamily. Monomer.

It localises to the cytoplasm. It carries out the reaction GTP + H2O = GDP + phosphate + H(+). Functionally, GTP hydrolase that promotes the GTP-dependent binding of aminoacyl-tRNA to the A-site of ribosomes during protein biosynthesis. The polypeptide is Elongation factor Tu (Rickettsia typhi (strain ATCC VR-144 / Wilmington)).